Consider the following 202-residue polypeptide: Josephin-1 (202 aa).

The interval 1–22 is disordered; that stretch reads MSCVPWKGDKAKAESSDLPQAA. Residue S15 is modified to Phosphoserine. The Josephin domain occupies 23–202; sequence PPQIYHEKQR…EAHQSWRADV (180 aa). C36 serves as the catalytic Nucleophile. Catalysis depends on H139, which acts as the Proton acceptor.

In terms of assembly, interacts with beta-actin/ACTB. In terms of processing, monoubiquitinated. Ubiquitination activates deubiquitination activity in vitro. In terms of tissue distribution, widely expressed (at protein level).

It is found in the cell membrane. The protein resides in the cytoplasm. The enzyme catalyses Thiol-dependent hydrolysis of ester, thioester, amide, peptide and isopeptide bonds formed by the C-terminal Gly of ubiquitin (a 76-residue protein attached to proteins as an intracellular targeting signal).. Deubiquitinates monoubiquitinated probes (in vitro). When ubiquitinated, cleaves 'Lys-63'-linked and 'Lys-48'-linked poly-ubiquitin chains (in vitro), hence may act as a deubiquitinating enzyme. May increase macropinocytosis and suppress clathrin- and caveolae-mediated endocytosis. May enhance membrane dynamics and cell motility independently of its catalytic activity. The protein is Josephin-1 (Josd1) of Mus musculus (Mouse).